The chain runs to 180 residues: uncharacterized protein (180 aa).

A disordered region spans residues 138–180 (SVMPVPMPQQNSDNGSTPHIVDSSKSKDKSSNDGDNGVFTGDE). Positions 145-154 (PQQNSDNGST) are enriched in polar residues. Residues 159 to 169 (DSSKSKDKSSN) show a composition bias toward basic and acidic residues.

This is an uncharacterized protein from Acidianus filamentous virus 2 (isolate Italy/Pozzuoli) (AFV-2).